The following is a 333-amino-acid chain: D-threonate 4-phosphate dehydrogenase (333 aa).

Residues His-140 and Thr-141 each coordinate substrate. A divalent metal cation is bound by residues His-170, His-214, and His-270. Positions 278, 287, and 296 each coordinate substrate.

This sequence belongs to the PdxA family. PdxA2 subfamily. In terms of assembly, homodimer. The cofactor is a divalent metal cation.

The enzyme catalyses 4-O-phospho-D-threonate + NAD(+) = dihydroxyacetone phosphate + CO2 + NADH. In terms of biological role, catalyzes the NAD-dependent oxidation and subsequent decarboxylation of D-threonate 4-phosphate to produce dihydroxyacetone phosphate (DHAP). Can also use 4-hydroxy-L-threonine 4-phosphate as substrate. The protein is D-threonate 4-phosphate dehydrogenase of Cupriavidus necator (strain ATCC 17699 / DSM 428 / KCTC 22496 / NCIMB 10442 / H16 / Stanier 337) (Ralstonia eutropha).